Reading from the N-terminus, the 437-residue chain is Acyl-coenzyme A thioesterase 2, chloroplastic (437 aa).

The transit peptide at 1–13 (MDLSSSPNHPITV) directs the protein to the chloroplast. HotDog ACOT-type domains lie at 89 to 211 (ILYN…RDSK) and 287 to 404 (RDTR…RPEA).

It belongs to the acyl coenzyme A hydrolase family. Mostly expressed at low levels in glandular trichomes (lupulin glands), and, to a lower extent, in stems, leaves, flowers and cones.

The protein resides in the plastid. It is found in the chloroplast. Its function is as follows. Acyl-CoA thioesterases are a group of enzymes that catalyze the hydrolysis of acyl-CoAs to the free fatty acid and coenzyme A (CoASH), providing the potential to regulate intracellular levels of acyl-CoAs, free fatty acids and CoASH. The polypeptide is Acyl-coenzyme A thioesterase 2, chloroplastic (Humulus lupulus (European hop)).